The primary structure comprises 226 residues: V-type proton ATPase subunit E 1 (226 aa).

Alanine 2 is subject to N-acetylalanine. Residue tyrosine 56 is modified to Phosphotyrosine.

Belongs to the V-ATPase E subunit family. V-ATPase is a heteromultimeric enzyme made up of two complexes: the ATP-hydrolytic V1 complex and the proton translocation V0 complex. The V1 complex consists of three catalytic AB heterodimers that form a heterohexamer, three peripheral stalks each consisting of EG heterodimers, one central rotor including subunits D and F, and the regulatory subunits C and H. The proton translocation complex V0 consists of the proton transport subunit a, a ring of proteolipid subunits c9c'', rotary subunit d, subunits e and f, and the accessory subunits ATP6AP1/Ac45 and ATP6AP2/PRR. Interacts with RABL2/RABL2A; binds preferentially to GTP-bound RABL2. Interacts with ALDOC. Interacts with RAB11B. As to expression, expressed within the midpiece of sperm tail (at protein level). Kidney; localizes to early distal nephron, encompassing thick ascending limbs and distal convoluted tubules (at protein level).

The protein localises to the apical cell membrane. It localises to the cytoplasmic vesicle. It is found in the secretory vesicle. Its subcellular location is the synaptic vesicle membrane. The protein resides in the clathrin-coated vesicle membrane. In terms of biological role, subunit of the V1 complex of vacuolar(H+)-ATPase (V-ATPase), a multisubunit enzyme composed of a peripheral complex (V1) that hydrolyzes ATP and a membrane integral complex (V0) that translocates protons. V-ATPase is responsible for acidifying and maintaining the pH of intracellular compartments and in some cell types, is targeted to the plasma membrane, where it is responsible for acidifying the extracellular environment. The polypeptide is V-type proton ATPase subunit E 1 (Atp6v1e1) (Mus musculus (Mouse)).